A 367-amino-acid polypeptide reads, in one-letter code: DNA replication and repair protein RecF (367 aa).

30 to 37 (GSNGSGKT) serves as a coordination point for ATP.

Belongs to the RecF family.

Its subcellular location is the cytoplasm. The RecF protein is involved in DNA metabolism; it is required for DNA replication and normal SOS inducibility. RecF binds preferentially to single-stranded, linear DNA. It also seems to bind ATP. The polypeptide is DNA replication and repair protein RecF (Pseudomonas putida (strain ATCC 700007 / DSM 6899 / JCM 31910 / BCRC 17059 / LMG 24140 / F1)).